A 352-amino-acid chain; its full sequence is MRKIILIFFIFLILQNIYAYEKIYDVNHVCYYTLTSVELQKFVKTAEIITPLNADNKTTITKDTILVGNPEENPLTKKYIGFFKIKINKTFPGKNKGIIEKQIINGHTVILLAGSDIQGTYASIITFANLNDIPENPIICETSNKVNIYSTSLNSEYFRDFIEKNILTPKEIEKVKSLSYKLKGKDKKATIENIAKWVANNIKYDYDKCKKIESGKFSWDEYNTPSETVKTKKGVCLDYATLTSALLLNDNIIPYMLDVALYNTSSLKISSYHASVAVKIDNTYFVIDQQPYLIPINEYTAQTFEDNLRIASIVMFRVVKERDGIKLIKEKEVPGIAIYGDLINLLEMRFNN.

The protein belongs to the UPF0252 family.

The chain is UPF0252 protein MJ1282 from Methanocaldococcus jannaschii (strain ATCC 43067 / DSM 2661 / JAL-1 / JCM 10045 / NBRC 100440) (Methanococcus jannaschii).